Consider the following 321-residue polypeptide: Nucleotide-binding protein GOX0815 (321 aa).

An ATP-binding site is contributed by 27-34; the sequence is GLSGAGKS. Residue 72–75 participates in GTP binding; it reads DVRS.

This sequence belongs to the RapZ-like family.

In terms of biological role, displays ATPase and GTPase activities. The protein is Nucleotide-binding protein GOX0815 of Gluconobacter oxydans (strain 621H) (Gluconobacter suboxydans).